The primary structure comprises 224 residues: MHNLVINDLPEEGLPTALFEPSELIDFKIAWDWQRKWQEKLLAEPSNKQAVWMLEHFDCYTLGRGASEDNLLFDVEKPPIDFYRIDRGGDVTHHLPGQLVVYLVLDLRRYKTDLDWYLRQLENVLLDVLDGLGLNGYRINGMTGVWCNGKKVASIGISCRRWITQHGIALNVDCDLLGFNQIVPCGLKDYQTGRLNSWLPKLQMKEVRFLMKKSLNKRFGLLWI.

Residues 45–223 (PSNKQAVWML…SLNKRFGLLW (179 aa)) form the BPL/LPL catalytic domain. Residues 87–94 (RGGDVTHH), 154–156 (SIG), and 167–169 (GIA) each bind substrate. Residue cysteine 185 is the Acyl-thioester intermediate of the active site.

Belongs to the LipB family.

Its subcellular location is the cytoplasm. The catalysed reaction is octanoyl-[ACP] + L-lysyl-[protein] = N(6)-octanoyl-L-lysyl-[protein] + holo-[ACP] + H(+). It functions in the pathway protein modification; protein lipoylation via endogenous pathway; protein N(6)-(lipoyl)lysine from octanoyl-[acyl-carrier-protein]: step 1/2. Functionally, catalyzes the transfer of endogenously produced octanoic acid from octanoyl-acyl-carrier-protein onto the lipoyl domains of lipoate-dependent enzymes. Lipoyl-ACP can also act as a substrate although octanoyl-ACP is likely to be the physiological substrate. The chain is Octanoyltransferase from Prochlorococcus marinus (strain SARG / CCMP1375 / SS120).